The sequence spans 335 residues: Nucleoid-associated protein YejK (335 aa).

This sequence belongs to the YejK family.

It localises to the cytoplasm. The protein localises to the nucleoid. The chain is Nucleoid-associated protein YejK from Salmonella schwarzengrund (strain CVM19633).